A 537-amino-acid polypeptide reads, in one-letter code: Zinc metalloproteinase nas-23 (537 aa).

Positions 1–16 are cleaved as a signal peptide; sequence MRFLILVLAGSIGIYG. A propeptide spanning residues 17 to 111 is cleaved from the precursor; sequence VNLPKIPKLS…EQLDHSRTKR (95 aa). N-linked (GlcNAc...) asparagine glycosylation occurs at Asn77. The Peptidase M12A domain maps to 116 to 311; the sequence is NAMYPKTIWL…AKINRHYNCE (196 aa). Intrachain disulfides connect Cys156-Cys310, Cys178-Cys199, Cys314-Cys334, Cys336-Cys345, Cys356-Cys385, and Cys412-Cys433. Residue His207 participates in Zn(2+) binding. Residue Glu208 is part of the active site. Residues His211 and His217 each coordinate Zn(2+). In terms of domain architecture, EGF-like spans 306–346; sequence RHYNCEKNCKNKITCLNGGYQHPKNCKICVCPPGYGGSDCK. The region spanning 356 to 471 is the CUB domain; sequence CTGVLVAGET…VQLRYSTVDG (116 aa). N-linked (GlcNAc...) asparagine glycosylation is present at Asn481.

Zn(2+) serves as cofactor. As to expression, expressed in the hypodermis, rectum and to a lesser extent in pharyngeal muscles and intestine.

It is found in the secreted. In terms of biological role, metalloprotease. The sequence is that of Zinc metalloproteinase nas-23 (nas-23) from Caenorhabditis elegans.